The following is a 680-amino-acid chain: Trehalase (680 aa).

Positions 1–27 are disordered; it reads MVLHAQPPDQSTETAREAKALAGATDG.

The protein belongs to the glycosyl hydrolase 15 family. In terms of assembly, homomultimer. Phosphate serves as cofactor.

The catalysed reaction is alpha,alpha-trehalose + H2O = alpha-D-glucose + beta-D-glucose. It functions in the pathway glycan degradation; trehalose degradation; D-glucose from alpha,alpha-trehalose: step 1/1. Its function is as follows. Catalyzes the hydrolysis of alpha,alpha-trehalose into two molecules of D-glucose. This is Trehalase from Mycobacterium tuberculosis (strain ATCC 25618 / H37Rv).